A 156-amino-acid polypeptide reads, in one-letter code: Small ribosomal subunit protein uS7c (156 aa).

The protein belongs to the universal ribosomal protein uS7 family. As to quaternary structure, part of the 30S ribosomal subunit.

Its subcellular location is the plastid. In terms of biological role, one of the primary rRNA binding proteins, it binds directly to 16S rRNA where it nucleates assembly of the head domain of the 30S subunit. This Prototheca wickerhamii protein is Small ribosomal subunit protein uS7c (rps7).